A 287-amino-acid chain; its full sequence is Seed leukoagglutinin (287 aa).

A signal peptide spans 1-29 (MATSNSKPTQVLLATFLTFFFLLLNNVNS). Y74 is a binding site for N-acetyl-alpha-neuraminyl-(2-&gt;3)-beta-D-galactosyl-(1-&gt;4)-beta-D-glucose. A glycan (N-linked (GlcNAc...) (paucimannose) asparagine) is linked at N90. Positions 116, 133, and 136 each coordinate N-acetyl-alpha-neuraminyl-(2-&gt;3)-beta-D-galactosyl-(1-&gt;4)-beta-D-glucose. An N-linked (GlcNAc...) (paucimannose) asparagine glycan is attached at N142. E156 and D158 together coordinate Mn(2+). Ca(2+) is bound by residues D158, Y160, D166, and D169. Residues Y160 and D166 each contribute to the N-acetyl-alpha-neuraminyl-(2-&gt;3)-beta-D-galactosyl-(1-&gt;4)-beta-D-glucose site. Mn(2+) is bound by residues D169 and H174. A glycan (N-linked (GlcNAc...) (high mannose) asparagine; partial) is linked at N208. Residue N220 is glycosylated (N-linked (GlcNAc...) (paucimannose) asparagine; partial). E253 provides a ligand contact to N-acetyl-alpha-neuraminyl-(2-&gt;3)-beta-D-galactosyl-(1-&gt;4)-beta-D-glucose. Positions 279–287 (NVHIARYTA) are cleaved as a propeptide — removed in mature form.

The protein belongs to the leguminous lectin family. In terms of assembly, homodimer; disulfide-linked. Dimer of homodimers. In terms of processing, the glycosylation on N-90 is determined to by of the high mannose type in PubMed:26003537, while PubMed:27720757 found a paucimannose at this position. Post-translationally, processed at its C-terminus.

Sialic acid-binding lectin recognizing oligosaccharides containing terminal sialic acid linked via alpha-2,3 bond to penultimate galactose residues. Binds the trisaccharide sequence Neu5Ac-alpha-2,3-Gal-beta-1,4-GlcNAc. Binds fetuin when fully glycosylated but not when the high mannose-type glycans are removed, although the secondary structure is virtually unaffected by deglycosylation of the high mannose-type glycans. The lectin activity may depend on the presence of a single GlcNAc attached to N-90. The protein is Seed leukoagglutinin of Maackia amurensis (Amur maackia).